Here is a 137-residue protein sequence, read N- to C-terminus: Putative pre-16S rRNA nuclease (137 aa).

It belongs to the YqgF nuclease family.

The protein resides in the cytoplasm. Functionally, could be a nuclease involved in processing of the 5'-end of pre-16S rRNA. The polypeptide is Putative pre-16S rRNA nuclease (Desulforamulus reducens (strain ATCC BAA-1160 / DSM 100696 / MI-1) (Desulfotomaculum reducens)).